A 327-amino-acid polypeptide reads, in one-letter code: Gonadotropin-releasing hormone receptor (327 aa).

The Extracellular segment spans residues 1 to 38 (MANNASLEQDPNHCSAINNSIPLIQGKLPTLTVSGKIR). N-linked (GlcNAc...) asparagine glycosylation is found at Asn-4 and Asn-18. Residues 39–58 (VTVTFFLFLLSTAFNASFLL) traverse the membrane as a helical segment. The Cytoplasmic segment spans residues 59 to 77 (KLQKWTQKRKKGKKLSRMK). The chain crosses the membrane as a helical span at residues 78–97 (VLLKHLTLANLLETLIVMPL). Residues 98-115 (DGMWNITVQWYAGEFLCK) are Extracellular-facing. Asn-102 carries N-linked (GlcNAc...) asparagine glycosylation. Cysteines 114 and 195 form a disulfide. A helical membrane pass occupies residues 116-137 (VLSYLKLFSMYAPAFMMVVISL). Topologically, residues 138–164 (DRSLAITQPLAVQSNSKLEQSMISLAW) are cytoplasmic. A helical membrane pass occupies residues 165–184 (ILSIVFAGPQLYIFRMIYLA). The Extracellular portion of the chain corresponds to 185–211 (DGSGPTVFSQCVTHCSFPQWWHQAFYN). Residues 212-231 (FFTFGCLFIIPLLIMLICNA) traverse the membrane as a helical segment. Over 232-280 (KIIFALTRVLHQDPRKLQLNQSKNNIPRARLRTLKMTVAFATSFVVCWT) the chain is Cytoplasmic. The chain crosses the membrane as a helical span at residues 281–299 (PYYVLGIWYWFDPEMLNRV). Over 300–305 (SEPVNH) the chain is Extracellular. A helical transmembrane segment spans residues 306–325 (FFFLFAFLNPCFDPLIYGYF). At 326–327 (SL) the chain is on the cytoplasmic side.

The protein belongs to the G-protein coupled receptor 1 family. In terms of tissue distribution, pituitary gland.

Its subcellular location is the cell membrane. Functionally, receptor for gonadotropin releasing hormone (GnRH) that mediates the action of GnRH to stimulate the secretion of the gonadotropic hormones luteinizing hormone (LH) and follicle-stimulating hormone (FSH). This receptor mediates its action by association with G-proteins that activate a phosphatidylinositol-calcium second messenger system. This Mus musculus (Mouse) protein is Gonadotropin-releasing hormone receptor (Gnrhr).